We begin with the raw amino-acid sequence, 168 residues long: Phosphopantetheine adenylyltransferase (168 aa).

Substrate is bound at residue serine 9. Residues 9–10 (SF) and histidine 17 contribute to the ATP site. Residues lysine 41, leucine 73, and arginine 87 each contribute to the substrate site. Residues 88–90 (GMR), glutamate 98, and 123–129 (WIYTSSS) each bind ATP.

The protein belongs to the bacterial CoaD family. Homohexamer. Mg(2+) is required as a cofactor.

The protein resides in the cytoplasm. It catalyses the reaction (R)-4'-phosphopantetheine + ATP + H(+) = 3'-dephospho-CoA + diphosphate. Its pathway is cofactor biosynthesis; coenzyme A biosynthesis; CoA from (R)-pantothenate: step 4/5. Its function is as follows. Reversibly transfers an adenylyl group from ATP to 4'-phosphopantetheine, yielding dephospho-CoA (dPCoA) and pyrophosphate. The sequence is that of Phosphopantetheine adenylyltransferase from Desulfosudis oleivorans (strain DSM 6200 / JCM 39069 / Hxd3) (Desulfococcus oleovorans).